The sequence spans 1419 residues: Formin-1 (1419 aa).

Residues 1 to 622 (MEGTHCTLQL…TAEPQHQSPP (622 aa)) are microtubule-binding. 4 disordered regions span residues 138 to 194 (DWQG…MGKD), 262 to 331 (LGRE…KVVA), 343 to 641 (VVKT…TPKD), and 685 to 711 (SLTE…DTEE). The segment covering 151 to 163 (RSTHGNKKPRRSS) has biased composition (basic residues). The segment covering 298–317 (SHQDPEKHPEAEKDEMEKPA) has biased composition (basic and acidic residues). Positions 394 to 411 (RSSQSPAGETASISSVSA) are enriched in polar residues. The span at 425-438 (IESEKLDEAPEGKR) shows a compositional bias: basic and acidic residues. Residues 456-842 (NKRRAGLPLG…LNISSLSQLS (387 aa)) are mediates interaction with alpha-catenin. Over residues 504 to 517 (FNNSASQSSTHKQT) the composition is skewed to polar residues. Over residues 520–529 (VPSPLSPRLP) the composition is skewed to pro residues. Residues 614 to 623 (AEPQHQSPPG) show a composition bias toward polar residues. Positions 685-694 (SLTEQDDRTP) are enriched in basic and acidic residues. A coiled-coil region spans residues 720-774 (AEYQAAILHLKREHKEEIENLQAQFELRAFHIRGEHAMITARLEETIENLKHELE). Disordered stretches follow at residues 859 to 978 (GMAS…AIEP) and 1390 to 1419 (SEKK…VTTN). Composition is skewed to pro residues over residues 868 to 882 (LPPP…PPLP) and 890 to 958 (PAPP…PPPG). Residues 870 to 957 (PPPASIPPPP…PPGLAPPPPP (88 aa)) enclose the FH1 domain. Residues 972 to 1388 (RKPAIEPSCP…KMAQESVSKL (417 aa)) enclose the FH2 domain.

This sequence belongs to the formin homology family. Cappuccino subfamily. Interacts with alpha-catenin and may interact with tubulin. In terms of processing, phosphorylated on serine and possibly threonine residues.

Its subcellular location is the nucleus. It is found in the cytoplasm. The protein resides in the cell junction. It localises to the adherens junction. The protein localises to the cell membrane. Functionally, plays a role in the formation of adherens junction and the polymerization of linear actin cables. The protein is Formin-1 (FMN1) of Homo sapiens (Human).